Reading from the N-terminus, the 239-residue chain is Protein Thf1 (239 aa).

A coiled-coil region spans residues 183–221; the sequence is ERVRKDLELYRSSLDRMKQARAVVEEMVKAARRQQERRQ. Basic and acidic residues predominate over residues 211 to 221; that stretch reads KAARRQQERRQ. A disordered region spans residues 211–239; that stretch reads KAARRQQERRQSAASLPETSLGDPSKPGS.

The protein belongs to the THF1 family.

Its function is as follows. May be involved in photosynthetic membrane biogenesis. The polypeptide is Protein Thf1 (Synechococcus sp. (strain JA-2-3B'a(2-13)) (Cyanobacteria bacterium Yellowstone B-Prime)).